The sequence spans 191 residues: MLLSDKDIRAEIDAGRVRIDPYDPSMVQPSSIDVRLDRYFRVFENHRYPHIDPAVEQPDLTRTVEPEGDEAFILHPGEFVLASTYEVISLPDDLASRLEGKSSLGRLGLVTHSTAGFIDPGFSGHVTLELSNLATLPIKLWPGMKIGQLCLFKLTSSAEFPYGSERYESRYQGQRGPTASRSFQNFHRTQV.

DCTP contacts are provided by residues 101-106, Asp119, 127-129, Gln148, Tyr162, and Gln174; these read KSSLGR and TLE. Glu129 functions as the Proton donor/acceptor in the catalytic mechanism. Residues 169–191 form a disordered region; it reads SRYQGQRGPTASRSFQNFHRTQV. Residues 171-191 are compositionally biased toward polar residues; that stretch reads YQGQRGPTASRSFQNFHRTQV.

Belongs to the dCTP deaminase family. In terms of assembly, homotrimer.

It catalyses the reaction dCTP + 2 H2O = dUMP + NH4(+) + diphosphate. It participates in pyrimidine metabolism; dUMP biosynthesis; dUMP from dCTP: step 1/1. Bifunctional enzyme that catalyzes both the deamination of dCTP to dUTP and the hydrolysis of dUTP to dUMP without releasing the toxic dUTP intermediate. This chain is dCTP deaminase, dUMP-forming, found in Streptomyces griseus subsp. griseus (strain JCM 4626 / CBS 651.72 / NBRC 13350 / KCC S-0626 / ISP 5235).